The following is a 63-amino-acid chain: Laccase-C1 (63 aa).

Belongs to the multicopper oxidase family. In terms of assembly, monomer. It depends on Cu cation as a cofactor. Glycosylated; contains 16% carbohydrates.

It is found in the secreted. The enzyme catalyses 4 hydroquinone + O2 = 4 benzosemiquinone + 2 H2O. Its activity is regulated as follows. Inhibited by sodium azide. Lignin degradation and detoxification of lignin-derived products. Oxidation of a broad range of substrates including mono-, di- and polyphenols, aromatic amines and methoxy-substituted phenols accompanied by reduction of oxygen to water. The protein is Laccase-C1 of Cerrena unicolor (Canker rot fungus).